The following is a 278-amino-acid chain: HTH-type transcriptional activator RhaS (278 aa).

Positions 174-272 constitute an HTH araC/xylS-type domain; it reads NHLIAWLEDH…GWSPREIRQG (99 aa). DNA-binding regions (H-T-H motif) lie at residues 191 to 212 and 239 to 262; these read EAIA…KQHT and VTHI…RREF.

Binds DNA as a dimer.

Its subcellular location is the cytoplasm. In terms of biological role, activates expression of the rhaBAD and rhaT operons. This chain is HTH-type transcriptional activator RhaS, found in Escherichia fergusonii (strain ATCC 35469 / DSM 13698 / CCUG 18766 / IAM 14443 / JCM 21226 / LMG 7866 / NBRC 102419 / NCTC 12128 / CDC 0568-73).